The primary structure comprises 576 residues: Putative ankyrin repeat protein L86 (576 aa).

11 ANK repeats span residues 68–101, 118–147, 159–188, 192–223, 227–260, 264–300, 304–337, 341–373, 377–408, 412–446, and 448–480; these read HGWT…DPNI, TRIN…NVNF, SGGF…NPNI, KGNT…DLNS, KRKT…NPNI, KGNT…NPNI, SGIS…DPNI, QGLT…DPNI, KGKN…NPNA, KGRT…SLTD, and NGKK…TFDV.

The chain is Putative ankyrin repeat protein L86 from Acanthamoeba polyphaga mimivirus (APMV).